We begin with the raw amino-acid sequence, 540 residues long: L-aspartate oxidase (540 aa).

FAD is bound by residues Ser16 to Ala19, Lys38, Ser45 to Gly52, Asn161 to Ala162, and Asp223. Succinate-binding positions include His244 and Thr259 to Glu260. The active-site Proton donor/acceptor is the Arg290. Position 375 (Glu375) interacts with FAD. Ser389 serves as a coordination point for succinate. Ser391–Leu392 lines the FAD pocket.

The protein belongs to the FAD-dependent oxidoreductase 2 family. NadB subfamily. In terms of assembly, monomer. Homodimer. Both the monomeric and dimeric forms of the enzyme are catalytically active. It depends on FAD as a cofactor.

It localises to the cytoplasm. It carries out the reaction L-aspartate + O2 = iminosuccinate + H2O2. The enzyme catalyses fumarate + L-aspartate = iminosuccinate + succinate. The protein operates within cofactor biosynthesis; NAD(+) biosynthesis; iminoaspartate from L-aspartate (oxidase route): step 1/1. Its activity is regulated as follows. Inhibited by the product iminoaspartate. Competitively inhibited by mesotartrate. NAD acts as a competitive inhibitor to FAD. Inhibited by iodoacetic acid, diethylpyrocarbonate and tetranitromethane. Catalyzes the oxidation of L-aspartate to iminoaspartate, the first step in the de novo biosynthesis of NAD(+). Can use either oxygen or fumarate as electron acceptors, which allows the enzyme to be functional under aerobic and anaerobic conditions. In vivo, fumarate is used under anaerobic conditions, and oxygen is the predominant electron acceptor under aerobic conditions due to the lower fumarate levels. In vitro, fumarate is a more efficient electron acceptor and is kinetically superior to oxygen. The chain is L-aspartate oxidase from Escherichia coli (strain K12).